We begin with the raw amino-acid sequence, 156 residues long: MAEAAQAQQQNFAIQRIFLKDVSFEAPNSPTMFQKEWNPDVKLDLDTQSRELGEGVYEVVLRLTVTVKNEEETAFLCEVQQGGIFTAGQMEEAQLAHCLGAFCPNILFPYARETISSLVVKGTFPQLNLAPVNFDALFMNYLQSQAQENAAAPSEA.

Belongs to the SecB family. As to quaternary structure, homotetramer, a dimer of dimers. One homotetramer interacts with 1 SecA dimer.

The protein resides in the cytoplasm. Its function is as follows. One of the proteins required for the normal export of preproteins out of the cell cytoplasm. It is a molecular chaperone that binds to a subset of precursor proteins, maintaining them in a translocation-competent state. It also specifically binds to its receptor SecA. The polypeptide is Protein-export protein SecB (Aliivibrio fischeri (strain ATCC 700601 / ES114) (Vibrio fischeri)).